The sequence spans 923 residues: Protocadherin gamma-B5 (923 aa).

A signal peptide spans 1–30 (MGRGTGELGRAERLPVLFLFLLSLFCPALC). Cadherin domains lie at 31-133 (EQIR…TPKF), 134-242 (TQNS…PPVF), 243-343 (NRDV…SPEV), 344-448 (TFHS…APVF), 449-558 (HQAS…APRV), and 566-671 (DGSA…LPDI). Residues 31–687 (EQIRYRIPEE…SDPQAELQFY (657 aa)) are Extracellular-facing. Residues asparagine 415 and asparagine 541 are each glycosylated (N-linked (GlcNAc...) asparagine). A helical membrane pass occupies residues 688–708 (LVVALALISVLFLLAVILAIA). The Cytoplasmic portion of the chain corresponds to 709-923 (LRLRRSSSPA…KKKSGKKEKK (215 aa)). Disordered regions lie at residues 794-832 (TSHP…WPNN) and 893-923 (ATLT…KEKK). Over residues 807–832 (WRFSQAQRPGTSGSQNGDDTGTWPNN) the composition is skewed to polar residues. The segment covering 913-923 (NKKKSGKKEKK) has biased composition (basic residues).

Its subcellular location is the cell membrane. Functionally, potential calcium-dependent cell-adhesion protein. May be involved in the establishment and maintenance of specific neuronal connections in the brain. The sequence is that of Protocadherin gamma-B5 (PCDHGB5) from Pan troglodytes (Chimpanzee).